Reading from the N-terminus, the 479-residue chain is MSDVTIVKEGWVQKRGEYIKNWRPRYFLLKTDGSFIGYKEKPQDVDLPYPLNNFSVAKCQLMKTERPKPNTFIIRCLQWTTVIERTFHVDTPEEREEWTEAIQAVADRLQRQEEERMNCSPTSQIDNIGEEEMDASTTHHKRKTMNDFDYLKLLGKGTFGKVILVREKASGKYYAMKILKKEVIIAKDEVAHTLTESRVLKNTRHPFLTSLKYSFQTKDRLCFVMEYVNGGELFFHLSRERVFSEDRTRFYGAEIVSALDYLHSGKIVYRDLKLENLMLDKDGHIKITDFGLCKEGITDAATMKTFCGTPEYLAPEVLEDNDYGRAVDWWGLGVVMYEMMCGRLPFYNQDHEKLFELILMEDIKFPRTLSSDAKSLLSGLLIKDPNKRLGGGPDDAKEIMRHSFFSGVNWQDVYDKKLVPPFKPQVTSETDTRYFDEEFTAQTITITPPEKYDDDGMDGMDNERRPHFPQFSYSASGRE.

Ser2 is modified (N-acetylserine). The PH domain maps to 5–107 (TIVKEGWVQK…WTEAIQAVAD (103 aa)). A disulfide bridge links Cys59 with Cys76. Residues 148–405 (FDYLKLLGKG…AKEIMRHSFF (258 aa)) enclose the Protein kinase domain. ATP-binding positions include 154–162 (LGKGTFGKV) and Lys177. The active-site Proton acceptor is the Asp271. A disulfide bond links Cys293 and Cys307. Residue Thr302 is glycosylated (O-linked (GlcNAc) threonine). Position 305 is a phosphothreonine; by PDPK1 (Thr305). Thr309 is a glycosylation site (O-linked (GlcNAc) threonine). In terms of domain architecture, AGC-kinase C-terminal spans 406 to 479 (SGVNWQDVYD…QFSYSASGRE (74 aa)). The segment at 445–479 (TITPPEKYDDDGMDGMDNERRPHFPQFSYSASGRE) is disordered. Thr447 carries the post-translational modification Phosphothreonine. Residue Ser472 is modified to Phosphoserine; by PKC/PRKCZ. Residue Ser472 is glycosylated (O-linked (GlcNAc) serine; alternate).

Belongs to the protein kinase superfamily. AGC Ser/Thr protein kinase family. RAC subfamily. In terms of assembly, interacts (via PH domain) with TCL1A; this enhances AKT3 phosphorylation and activation. Interacts with TRAF6. Interacts with KCTD20. Interacts with BTBD10. Post-translationally, phosphorylation on Thr-305 and Ser-472 is required for full activity. Phosphorylation of the activation loop at Thr-305 by PDPK1/PDK1 is a prerequisite for full activation. Phosphorylation at Ser-472 by mTORC2 in response to growth factors plays a key role in AKT1 activation by facilitating subsequent phosphorylation of the activation loop by PDPK1/PDK1. In terms of processing, ubiquitinated. When fully phosphorylated and translocated into the nucleus, undergoes 'Lys-48'-polyubiquitination catalyzed by TTC3, leading to its degradation by the proteasome. O-GlcNAcylation at Thr-302 and Thr-309 inhibits activating phosphorylation at Thr-305 via disrupting the interaction between AKT and PDPK1/PDK1. In terms of tissue distribution, isoform 1 is expressed in prostate, testis, uterus and mammary gland and isoform 2 is expressed in prostate, testis and mammary gland.

The protein resides in the nucleus. It is found in the cytoplasm. The protein localises to the membrane. It catalyses the reaction L-seryl-[protein] + ATP = O-phospho-L-seryl-[protein] + ADP + H(+). The catalysed reaction is L-threonyl-[protein] + ATP = O-phospho-L-threonyl-[protein] + ADP + H(+). Its activity is regulated as follows. Two specific sites, one in the kinase domain (Thr-305) and the other in the C-terminal regulatory region (Ser-472), need to be phosphorylated for its full activation. IGF-1 leads to the activation of AKT3, which may play a role in regulating cell survival. Functionally, AKT3 is one of 3 closely related serine/threonine-protein kinases (AKT1, AKT2 and AKT3) called the AKT kinase, and which regulate many processes including metabolism, proliferation, cell survival, growth and angiogenesis. This is mediated through serine and/or threonine phosphorylation of a range of downstream substrates. Over 100 substrate candidates have been reported so far, but for most of them, no isoform specificity has been reported. AKT3 is the least studied AKT isoform. It plays an important role in brain development and is crucial for the viability of malignant glioma cells. AKT3 isoform may also be the key molecule in up-regulation and down-regulation of MMP13 via IL13. Required for the coordination of mitochondrial biogenesis with growth factor-induced increases in cellular energy demands. Down-regulation by RNA interference reduces the expression of the phosphorylated form of BAD, resulting in the induction of caspase-dependent apoptosis. The protein is RAC-gamma serine/threonine-protein kinase (Akt3) of Mus musculus (Mouse).